The following is a 749-amino-acid chain: MEEESGEELGLDRSTPKDFHFYHMDLYDSEDRLHLFPEENTRMRKVVQAEMANESRGAGDGKAQRDLQEEVDELVHLYGLEDDHELGDEFVDENIPRTGVSEYPPYMMKRRDPAREQRDWRLSGEAAEAEDLGFGGWGSAGQCQDLREAYRYTHGRASEEYECYVIPEEEDEEEAADVFCVTCKTPIRAFQKVFDEHKEHEVIPLNEALESAKDEIHKNMYKLEKQIIEMENFANHLEEVFITVEENFGKQEQNFESHYNEILETLAQKYEEKIQALGEKKKEKLEALYGQLVSCGENLDTCKELMETIEEMCHEEKVDFIKDAVAMADRLGKFLKTKTDVEISAQPEFEDQTLDFSDVEQLMGSINTIPAPSAPVINPQVPNSATGSSVRVCWSLYSDDTVESYQLSYRPVQDSSPGTDQAEFTVTVKETYCSVTNLVPNTQYEFWVTAHNRAGPSPSSERAVYMTAPSPPIIKTKEIRSCEEAVLICWESGNLNPVDSYTVELTQAESPEASGVTESVVGIPTCESVVQLQPGRSYIIYVRALNMGGPSVRSEPATVHTIGSYFRLNKDTCHPWLTISEDGLTAVRSERRTPARELSPSDTHFTRCVAVMGNLIPVRGHHYWEVEVDEHLDYRVGVAFADVRKQEDLGANCLSWCMRHTFASSRHKYEFLHNRTTPDIRITVPPKKIGILLDYEHSKLSFFNVDLSQHLYTFSCQLHEFVHPCFSLEKPGCLKVHNGISMPKHVTFY.

The stretch at 205–317 forms a coiled coil; sequence LNEALESAKD…TIEEMCHEEK (113 aa). Fibronectin type-III domains are found at residues 375-470 and 471-564; these read PVIN…TAPS and PPII…TIGS. Positions 546–744 constitute a B30.2/SPRY domain; that stretch reads NMGGPSVRSE…KVHNGISMPK (199 aa).

Interacts with CMYA5. In cardiac muscles, identified in a complex composed of FSD2, CMYA5 and RYR2.

The protein localises to the nucleus. It localises to the sarcoplasmic reticulum. Its subcellular location is the cytoplasm. The protein resides in the perinuclear region. The polypeptide is Fibronectin type III and SPRY domain-containing protein 2 (FSD2) (Homo sapiens (Human)).